A 202-amino-acid polypeptide reads, in one-letter code: MSRYRGPRLRIVRRLGDLPGLTRKAARRSYPPGQHGQARRKRSEYAIRLEEKQKLRFNYGLSERQLVRYVKKARRMQGSTGTNLLQLLEMRLDNLVFRLGFAPTIPGARQLVNHGHVTVNGRVVDIASYNCRPGEVIGVRQREASRKLVTANLEYPGLANVPVHLDFDKNKLEAKVTGACEREWVALQINELLVVEYYSRKV.

A disordered region spans residues 23–42 (RKAARRSYPPGQHGQARRKR). Residues 90–154 (MRLDNLVFRL…SRKLVTANLE (65 aa)) enclose the S4 RNA-binding domain.

Belongs to the universal ribosomal protein uS4 family. As to quaternary structure, part of the 30S ribosomal subunit. Contacts protein S5. The interaction surface between S4 and S5 is involved in control of translational fidelity.

One of the primary rRNA binding proteins, it binds directly to 16S rRNA where it nucleates assembly of the body of the 30S subunit. Functionally, with S5 and S12 plays an important role in translational accuracy. This chain is Small ribosomal subunit protein uS4, found in Synechococcus elongatus (strain ATCC 33912 / PCC 7942 / FACHB-805) (Anacystis nidulans R2).